Reading from the N-terminus, the 274-residue chain is 3-methyl-2-oxobutanoate hydroxymethyltransferase (274 aa).

Aspartate 49 and aspartate 88 together coordinate Mg(2+). 3-methyl-2-oxobutanoate is bound by residues 49–50 (DS), aspartate 88, and lysine 118. Mg(2+) is bound at residue glutamate 120. Residue glutamate 187 is the Proton acceptor of the active site.

This sequence belongs to the PanB family. In terms of assembly, homodecamer; pentamer of dimers. The cofactor is Mg(2+).

It is found in the cytoplasm. It carries out the reaction 3-methyl-2-oxobutanoate + (6R)-5,10-methylene-5,6,7,8-tetrahydrofolate + H2O = 2-dehydropantoate + (6S)-5,6,7,8-tetrahydrofolate. It participates in cofactor biosynthesis; (R)-pantothenate biosynthesis; (R)-pantoate from 3-methyl-2-oxobutanoate: step 1/2. Its function is as follows. Catalyzes the reversible reaction in which hydroxymethyl group from 5,10-methylenetetrahydrofolate is transferred onto alpha-ketoisovalerate to form ketopantoate. This is 3-methyl-2-oxobutanoate hydroxymethyltransferase from Rhodopseudomonas palustris (strain TIE-1).